We begin with the raw amino-acid sequence, 66 residues long: Large ribosomal subunit protein bL33c (66 aa).

The protein belongs to the bacterial ribosomal protein bL33 family.

It is found in the plastid. The protein localises to the chloroplast. This is Large ribosomal subunit protein bL33c from Eucalyptus globulus subsp. globulus (Tasmanian blue gum).